Reading from the N-terminus, the 213-residue chain is Pyridoxine/pyridoxamine 5'-phosphate oxidase (213 aa).

Residues 8–11 (RKNY) and lysine 66 each bind substrate. Residues 61 to 66 (RIVLIK), 76 to 77 (FT), arginine 82, lysine 83, and glutamine 105 each bind FMN. Substrate contacts are provided by tyrosine 123, arginine 127, and serine 131. FMN-binding positions include 140–141 (QS) and tryptophan 184. 190–192 (RLH) is a substrate binding site. Residue arginine 194 participates in FMN binding.

Belongs to the pyridoxamine 5'-phosphate oxidase family. As to quaternary structure, homodimer. The cofactor is FMN.

It carries out the reaction pyridoxamine 5'-phosphate + O2 + H2O = pyridoxal 5'-phosphate + H2O2 + NH4(+). The catalysed reaction is pyridoxine 5'-phosphate + O2 = pyridoxal 5'-phosphate + H2O2. It functions in the pathway cofactor metabolism; pyridoxal 5'-phosphate salvage; pyridoxal 5'-phosphate from pyridoxamine 5'-phosphate: step 1/1. The protein operates within cofactor metabolism; pyridoxal 5'-phosphate salvage; pyridoxal 5'-phosphate from pyridoxine 5'-phosphate: step 1/1. In terms of biological role, catalyzes the oxidation of either pyridoxine 5'-phosphate (PNP) or pyridoxamine 5'-phosphate (PMP) into pyridoxal 5'-phosphate (PLP). In Paraburkholderia phytofirmans (strain DSM 17436 / LMG 22146 / PsJN) (Burkholderia phytofirmans), this protein is Pyridoxine/pyridoxamine 5'-phosphate oxidase.